Consider the following 143-residue polypeptide: Midkine (143 aa).

Positions 1-20 are cleaved as a signal peptide; sequence MQHRGFLLLTLLALLALTSA. 5 disulfides stabilise this stretch: C37–C61, C45–C70, C52–C74, C84–C116, and C94–C126.

This sequence belongs to the pleiotrophin family. As to quaternary structure, homodimer. Interacts with ALK. Interacts with LRP1; promotes neuronal survival. Interacts with LRP2. Interacts with NCAM1. Interacts (via C-terminal) with PTPRZ1 (via chondroitin sulfate chains); this interaction is inhibited by PTN; this interaction promotes neuronal migration. Interacts with NCL; this interaction promotes NCL clustering and lateral movements of this complex into lipid rafts leading to MDK internalization. Interacts with LRP6 and LRP8: this interaction is calcium dependent. Interacts with ITGA4. Interacts with ITGA6. Interacts with ITGB1. Interacts with ITGA4:ITGB1 complex; this interaction mediates MDK-induced osteoblast cells migration through PXN phosphorylation. Interacts with ITGA6:ITGB1 complex; this interaction mediates MDK-induced neurite outgrowth. Interacts with NOTCH2; this interaction mediates a nuclear accumulation of NOTCH2 and therefore activation of NOTCH2 signaling leading to interaction between HES1 and STAT3. Interacts with GPC2 (via heparan sulfate chain); this interaction is inhibited by heparin followed by chondroitin sulfate E; this interaction induces GPC2 clustering through heparan sulfate chain; this interaction induces neuronal cell adhesion and neurite outgrowth. Interacts with SDC3; this interaction induces SDC3 clustering; this interaction induces neuronal cell adhesion and neurite outgrowth. Interacts with SDC1. Interacts with CSPG5; this interaction promotes elongation of oligodendroglial precursor-like cells. As to expression, expressed in various tumor cell lines. In insulinoma tissue predominantly expressed in precancerous lesions.

It is found in the secreted. Functionally, secreted protein that functions as a cytokine and growth factor and mediates its signal through cell-surface proteoglycan and non-proteoglycan receptors. Binds cell-surface proteoglycan receptors via their chondroitin sulfate (CS) groups. Thereby regulates many processes like inflammatory response, cell proliferation, cell adhesion, cell growth, cell survival, tissue regeneration, cell differentiation and cell migration. Participates in inflammatory processes by exerting two different activities. Firstly, mediates neutrophils and macrophages recruitment to the sites of inflammation both by direct action by cooperating namely with ITGB2 via LRP1 and by inducing chemokine expression. This inflammation can be accompanied by epithelial cell survival and smooth muscle cell migration after renal and vessel damage, respectively. Secondly, suppresses the development of tolerogenic dendric cells thereby inhibiting the differentiation of regulatory T cells and also promote T cell expansion through NFAT signaling and Th1 cell differentiation. Promotes tissue regeneration after injury or trauma. After heart damage negatively regulates the recruitment of inflammatory cells and mediates cell survival through activation of anti-apoptotic signaling pathways via MAPKs and AKT pathways through the activation of angiogenesis. Also facilitates liver regeneration as well as bone repair by recruiting macrophage at trauma site and by promoting cartilage development by facilitating chondrocyte differentiation. Plays a role in brain by promoting neural precursor cells survival and growth through interaction with heparan sulfate proteoglycans. Binds PTPRZ1 and promotes neuronal migration and embryonic neurons survival. Binds SDC3 or GPC2 and mediates neurite outgrowth and cell adhesion. Binds chondroitin sulfate E and heparin leading to inhibition of neuronal cell adhesion induced by binding with GPC2. Binds CSPG5 and promotes elongation of oligodendroglial precursor-like cells. Also binds ITGA6:ITGB1 complex; this interaction mediates MDK-induced neurite outgrowth. Binds LRP1; promotes neuronal survival. Binds ITGA4:ITGB1 complex; this interaction mediates MDK-induced osteoblast cells migration through PXN phosphorylation. Binds anaplastic lymphoma kinase (ALK) which induces ALK activation and subsequent phosphorylation of the insulin receptor substrate (IRS1), followed by the activation of mitogen-activated protein kinase (MAPK) and PI3-kinase, and the induction of cell proliferation. Promotes epithelial to mesenchymal transition through interaction with NOTCH2. During arteriogenesis, plays a role in vascular endothelial cell proliferation by inducing VEGFA expression and release which in turn induces nitric oxide synthase expression. Moreover activates vasodilation through nitric oxide synthase activation. Negatively regulates bone formation in response to mechanical load by inhibiting Wnt/beta-catenin signaling in osteoblasts. In addition plays a role in hippocampal development, working memory, auditory response, early fetal adrenal gland development and the female reproductive system. This Homo sapiens (Human) protein is Midkine.